The following is a 624-amino-acid chain: Probable potassium transport system protein Kup 1 (624 aa).

12 consecutive transmembrane segments (helical) span residues 10–30 (LALG…LYAL), 48–68 (LSLI…MIIF), 94–114 (PVFY…GMLT), 133–153 (LYPY…SLQA), 159–179 (IGYL…ILGI), 210–230 (FLLG…ADIG), 242–262 (FFIA…NLIV), 270–290 (PFFM…ATVA), 331–351 (IYVP…CLAF), 363–383 (IAVN…AVSI), 388–408 (TFNV…FLGA), and 413–433 (FITG…IMYS).

The protein belongs to the HAK/KUP transporter (TC 2.A.72) family.

The protein localises to the cell inner membrane. The enzyme catalyses K(+)(in) + H(+)(in) = K(+)(out) + H(+)(out). Its function is as follows. Transport of potassium into the cell. Likely operates as a K(+):H(+) symporter. The chain is Probable potassium transport system protein Kup 1 from Legionella pneumophila (strain Paris).